The primary structure comprises 197 residues: Imidazoleglycerol-phosphate dehydratase (197 aa).

Belongs to the imidazoleglycerol-phosphate dehydratase family.

It is found in the cytoplasm. It catalyses the reaction D-erythro-1-(imidazol-4-yl)glycerol 3-phosphate = 3-(imidazol-4-yl)-2-oxopropyl phosphate + H2O. It participates in amino-acid biosynthesis; L-histidine biosynthesis; L-histidine from 5-phospho-alpha-D-ribose 1-diphosphate: step 6/9. The sequence is that of Imidazoleglycerol-phosphate dehydratase from Rhodopseudomonas palustris (strain ATCC BAA-98 / CGA009).